We begin with the raw amino-acid sequence, 283 residues long: Phosphatidylserine decarboxylase proenzyme (283 aa).

Active-site charge relay system; for autoendoproteolytic cleavage activity residues include aspartate 90, histidine 143, and serine 248. Serine 248 acts as the Schiff-base intermediate with substrate; via pyruvic acid; for decarboxylase activity in catalysis. Serine 248 carries the pyruvic acid (Ser); by autocatalysis modification.

It belongs to the phosphatidylserine decarboxylase family. PSD-B subfamily. Prokaryotic type I sub-subfamily. As to quaternary structure, heterodimer of a large membrane-associated beta subunit and a small pyruvoyl-containing alpha subunit. Requires pyruvate as cofactor. Is synthesized initially as an inactive proenzyme. Formation of the active enzyme involves a self-maturation process in which the active site pyruvoyl group is generated from an internal serine residue via an autocatalytic post-translational modification. Two non-identical subunits are generated from the proenzyme in this reaction, and the pyruvate is formed at the N-terminus of the alpha chain, which is derived from the carboxyl end of the proenzyme. The autoendoproteolytic cleavage occurs by a canonical serine protease mechanism, in which the side chain hydroxyl group of the serine supplies its oxygen atom to form the C-terminus of the beta chain, while the remainder of the serine residue undergoes an oxidative deamination to produce ammonia and the pyruvoyl prosthetic group on the alpha chain. During this reaction, the Ser that is part of the protease active site of the proenzyme becomes the pyruvoyl prosthetic group, which constitutes an essential element of the active site of the mature decarboxylase.

Its subcellular location is the cell membrane. It carries out the reaction a 1,2-diacyl-sn-glycero-3-phospho-L-serine + H(+) = a 1,2-diacyl-sn-glycero-3-phosphoethanolamine + CO2. It participates in phospholipid metabolism; phosphatidylethanolamine biosynthesis; phosphatidylethanolamine from CDP-diacylglycerol: step 2/2. Catalyzes the formation of phosphatidylethanolamine (PtdEtn) from phosphatidylserine (PtdSer). The polypeptide is Phosphatidylserine decarboxylase proenzyme (Francisella tularensis subsp. novicida (strain U112)).